Consider the following 205-residue polypeptide: Outer-membrane lipoprotein LolB (205 aa).

Residues 1-17 form the signal peptide; that stretch reads MRLRLFLAASALALLSG. Cysteine 18 carries the N-palmitoyl cysteine lipid modification. Residue cysteine 18 is the site of S-diacylglycerol cysteine attachment.

It belongs to the LolB family. In terms of assembly, monomer.

It is found in the cell outer membrane. Plays a critical role in the incorporation of lipoproteins in the outer membrane after they are released by the LolA protein. The sequence is that of Outer-membrane lipoprotein LolB from Pseudomonas aeruginosa (strain LESB58).